Here is a 230-residue protein sequence, read N- to C-terminus: Dephospho-CoA kinase (230 aa).

Positions Ile-3–Pro-225 constitute a DPCK domain. Position 11–16 (Ala-11–Thr-16) interacts with ATP.

This sequence belongs to the CoaE family.

The protein localises to the cytoplasm. The catalysed reaction is 3'-dephospho-CoA + ATP = ADP + CoA + H(+). The protein operates within cofactor biosynthesis; coenzyme A biosynthesis; CoA from (R)-pantothenate: step 5/5. Functionally, catalyzes the phosphorylation of the 3'-hydroxyl group of dephosphocoenzyme A to form coenzyme A. The sequence is that of Dephospho-CoA kinase from Synechococcus sp. (strain JA-3-3Ab) (Cyanobacteria bacterium Yellowstone A-Prime).